A 258-amino-acid chain; its full sequence is Development-specific 25 kDa protein (258 aa).

10-34 (VYVGGFSGFGYQVCQMMMKKPMKHL) provides a ligand contact to NAD(+). Ser-138 lines the substrate pocket. The Proton acceptor role is filled by Tyr-151.

Belongs to the short-chain dehydrogenases/reductases (SDR) family.

The chain is Development-specific 25 kDa protein from Sarcophaga peregrina (Flesh fly).